A 443-amino-acid chain; its full sequence is ATP-dependent protease ATPase subunit HslU (443 aa).

Residues Ile-18, 60 to 65 (GVGKTE), Asp-256, Glu-321, and Arg-393 contribute to the ATP site.

It belongs to the ClpX chaperone family. HslU subfamily. As to quaternary structure, a double ring-shaped homohexamer of HslV is capped on each side by a ring-shaped HslU homohexamer. The assembly of the HslU/HslV complex is dependent on binding of ATP.

The protein resides in the cytoplasm. Its function is as follows. ATPase subunit of a proteasome-like degradation complex; this subunit has chaperone activity. The binding of ATP and its subsequent hydrolysis by HslU are essential for unfolding of protein substrates subsequently hydrolyzed by HslV. HslU recognizes the N-terminal part of its protein substrates and unfolds these before they are guided to HslV for hydrolysis. This Histophilus somni (strain 2336) (Haemophilus somnus) protein is ATP-dependent protease ATPase subunit HslU.